The sequence spans 451 residues: Penicillin-binding protein 4* (451 aa).

Serine 61 acts as the Acyl-ester intermediate in catalysis.

It belongs to the beta-lactamase family.

It is found in the forespore outer membrane. It participates in cell wall biogenesis; peptidoglycan biosynthesis. Its function is as follows. Probably involved in peptidoglycan modification during cortex synthesis. The sequence is that of Penicillin-binding protein 4* (pbpE) from Bacillus subtilis (strain 168).